Here is a 226-residue protein sequence, read N- to C-terminus: MMSSVRTGASMALRARPTAQIVPFRAAAVASISSSSRKDATGAVAPAGAQHGIARRERREVPLPSQEGTKGAVQYALTTLDSIVNWARQSSLWPMTFGLACCAVEMMHLSTPRYDQDRLGIIFRASPRQSDVMIVAGTLTNKMAPALRQVYDQMPDPRWVISMGSCANGGGYYHYSYSVVRGCDRIVPVDIYVPGCPPTSEALMYGIFQLQRKMRNTKITRMWYRK.

The disordered stretch occupies residues 40–68 (ATGAVAPAGAQHGIARRERREVPLPSQEG). [4Fe-4S] cluster contacts are provided by C101, C102, C166, and C196.

Belongs to the complex I 20 kDa subunit family. As to quaternary structure, complex I is composed of about 40 different subunits. This is a component of the iron-sulfur (IP) fragment of the enzyme. It depends on [4Fe-4S] cluster as a cofactor.

The protein resides in the mitochondrion. The catalysed reaction is a ubiquinone + NADH + 5 H(+)(in) = a ubiquinol + NAD(+) + 4 H(+)(out). Functionally, core subunit of the mitochondrial membrane respiratory chain NADH dehydrogenase (Complex I) that is believed to belong to the minimal assembly required for catalysis. Complex I functions in the transfer of electrons from NADH to the respiratory chain. The immediate electron acceptor for the enzyme is believed to be ubiquinone. The protein is NADH-ubiquinone oxidoreductase 19.3 kDa subunit, mitochondrial of Neurospora crassa (strain ATCC 24698 / 74-OR23-1A / CBS 708.71 / DSM 1257 / FGSC 987).